Here is a 146-residue protein sequence, read N- to C-terminus: 3-hydroxyacyl-[acyl-carrier-protein] dehydratase FabZ (146 aa).

H46 is an active-site residue.

It belongs to the thioester dehydratase family. FabZ subfamily.

It localises to the cytoplasm. It catalyses the reaction a (3R)-hydroxyacyl-[ACP] = a (2E)-enoyl-[ACP] + H2O. Functionally, involved in unsaturated fatty acids biosynthesis. Catalyzes the dehydration of short chain beta-hydroxyacyl-ACPs and long chain saturated and unsaturated beta-hydroxyacyl-ACPs. In Acinetobacter baumannii (strain ATCC 17978 / DSM 105126 / CIP 53.77 / LMG 1025 / NCDC KC755 / 5377), this protein is 3-hydroxyacyl-[acyl-carrier-protein] dehydratase FabZ.